A 567-amino-acid polypeptide reads, in one-letter code: MNILNLKIIMFLLISNTIVVGGAWATSTCPDWPATRIAVEINALEQQLNKWSAAYHQQGHSPVTDDIYDQLQDKLRVWQSCRGLPDKTESQPIPGKGQFLHPVAHTGLKKLKDETALTRWMAGRKNLWVQPKVDGVAVTLVYHGGKLVQLLSRGNGVKGQNWTEKAPFISAIPQYIANAPALLTLQGELFLLMDGHQQAKSGGVNARSTVAGALMRKSPSPLLAQVGVFIWAWPDGPTTMKEKVALLQVMGFPFTAKYSEPVMSHLDVVQWRQFWFQAPLPFVTDGVVVRQEEEPAGRYWQATPGQWSMAWKYPPLQHIAEVKDIHFTLGRTGKGTVVLEVLPIKIDDKWIRRVNIGSVTRWKQWDIAPGDHITLALAGHGIPRLDNVVWRVHQRNTITAPNWDKFHQLSCFQRLPHGCEPQFLSRLIWLSGPGGLDIGGIGGGFWQELIHHELINDLVGWLLLTPEQIASIPGIGNARAEKIYQQFQRAKQQPFSRWLLALGFPQVVSVDAQWQVVLRRSLSEWATMAGIGQMRAKQIKHFWDHPDVQALADFLSTQKVVGFELTE.

Catalysis depends on K132, which acts as the N6-AMP-lysine intermediate.

This sequence belongs to the NAD-dependent DNA ligase family. LigB subfamily.

It catalyses the reaction NAD(+) + (deoxyribonucleotide)n-3'-hydroxyl + 5'-phospho-(deoxyribonucleotide)m = (deoxyribonucleotide)n+m + AMP + beta-nicotinamide D-nucleotide.. Catalyzes the formation of phosphodiester linkages between 5'-phosphoryl and 3'-hydroxyl groups in double-stranded DNA using NAD as a coenzyme and as the energy source for the reaction. The polypeptide is DNA ligase B (Yersinia pestis bv. Antiqua (strain Angola)).